The chain runs to 500 residues: Probable cytosol aminopeptidase (500 aa).

Positions 265 and 270 each coordinate Mn(2+). The active site involves Lys-277. 3 residues coordinate Mn(2+): Asp-288, Asp-347, and Glu-349. Arg-351 is an active-site residue.

This sequence belongs to the peptidase M17 family. The cofactor is Mn(2+).

It is found in the cytoplasm. The catalysed reaction is Release of an N-terminal amino acid, Xaa-|-Yaa-, in which Xaa is preferably Leu, but may be other amino acids including Pro although not Arg or Lys, and Yaa may be Pro. Amino acid amides and methyl esters are also readily hydrolyzed, but rates on arylamides are exceedingly low.. It catalyses the reaction Release of an N-terminal amino acid, preferentially leucine, but not glutamic or aspartic acids.. Functionally, presumably involved in the processing and regular turnover of intracellular proteins. Catalyzes the removal of unsubstituted N-terminal amino acids from various peptides. This is Probable cytosol aminopeptidase from Rickettsia rickettsii (strain Iowa).